The chain runs to 173 residues: Photosystem I assembly protein Ycf3 (173 aa).

TPR repeat units lie at residues 35–68 (AYVY…ETDP), 72–105 (GETL…NPKQ), and 120–153 (GRIA…NPGG).

This sequence belongs to the Ycf3 family.

It is found in the cellular thylakoid membrane. Functionally, essential for the assembly of the photosystem I (PSI) complex. May act as a chaperone-like factor to guide the assembly of the PSI subunits. In Synechococcus sp. (strain CC9902), this protein is Photosystem I assembly protein Ycf3.